The following is a 708-amino-acid chain: Double-strand break repair protein MRE11 (708 aa).

S2 carries the N-acetylserine modification. S2 is subject to Phosphoserine. Mn(2+) is bound by residues D20, H22, and D60. An interaction with NBN region spans residues 87 to 117; that stretch reads RPVQFEILSDQSVNFGFSKFPWVNYQDGNLN. Residue N128 coordinates Mn(2+). H129 functions as the Proton donor in the catalytic mechanism. The Mn(2+) site is built by H217, H245, and H247. Residue K255 forms a Glycyl lysine isopeptide (Lys-Gly) (interchain with G-Cter in SUMO2) linkage. S275 is modified (phosphoserine). Residue K282 forms a Glycyl lysine isopeptide (Lys-Gly) (interchain with G-Cter in UFM1) linkage. K339 participates in a covalent cross-link: Glycyl lysine isopeptide (Lys-Gly) (interchain with G-Cter in ubiquitin). A Glycyl lysine isopeptide (Lys-Gly) (interchain with G-Cter in SUMO) cross-link involves residue K384. K416 is covalently cross-linked (Glycyl lysine isopeptide (Lys-Gly) (interchain with G-Cter in SUMO2)). Residue K467 forms a Glycyl lysine isopeptide (Lys-Gly) (interchain with G-Cter in SUMO) linkage. Residue K480 forms a Glycyl lysine isopeptide (Lys-Gly) (interchain with G-Cter in ubiquitin) linkage. Disordered regions lie at residues 507–540 and 556–614; these read TRQK…ASAF and NDSD…AVSA. Residues 569–579 show a composition bias toward basic residues; that stretch reads GRGRGRGRRGG. R570, R572, R574, R576, R577, R580, R587, R592, and R594 each carry asymmetric dimethylarginine. The GAR signature appears at 570 to 594; sequence RGRGRGRRGGRGQNSASRGGSQRGR. Residues 599–614 are compositionally biased toward polar residues; that stretch reads LETSTRSRNSKTAVSA. Residue S619 is modified to Phosphoserine. A Glycyl lysine isopeptide (Lys-Gly) (interchain with G-Cter in SUMO2) cross-link involves residue K625. Position 641 is a phosphoserine (S641). S649 carries the post-translational modification Phosphoserine; by PLK1. The interval 651–708 is disordered; sequence VEEDIFPTTSKTDQRWSSTSSSKIMSQSQVSKGVDFESSEDDDDDPFMNTSSLRRNRR. Residues 667–681 show a composition bias toward low complexity; sequence SSTSSSKIMSQSQVS. K673 carries the N6-lactoyllysine modification. 2 positions are modified to phosphoserine; by ATM: S676 and S678. Over residues 687–696 the composition is skewed to acidic residues; sequence ESSEDDDDDP. The residue at position 688 (S688) is a Phosphoserine; by CDK2. Phosphoserine is present on residues S689 and S701. The segment covering 698-708 has biased composition (polar residues); sequence MNTSSLRRNRR.

The protein belongs to the MRE11/RAD32 family. In terms of assembly, component of the MRN complex composed of two heterodimers RAD50 and MRE11 associated with a single NBN. The MRN complexes dimerize on DNA to form joined MRN-MRN oligomers required for DNA double-strand break repair. As part of the MRN complex, interacts with MCM9; the interaction recruits the complex to DNA repair sites. Component of the BASC complex, at least composed of BRCA1, MSH2, MSH6, MLH1, ATM, BLM, RAD50, MRE11 and NBN. Found in a complex with TERF2. Interacts with DCLRE1C/Artemis and DCLRE1B/Apollo. Interacts with ATF2. Interacts with EXD2. Interacts with MRNIP. Interacts with SAMHD1; leading to stimulate 3'-5' exonuclease activity. Interacts (when ubiquitinated) with UBQLN4 (via its UBA domain). Interacts with CYREN (via XLF motif). Interacts with GFI1; promoting methylation by PRMT1. Interacts with DYNLL1; inhibiting the activity of MRE11. Interacts with C1QBP and RAD50; interaction takes place in absence of DNA damage to form the MRC (MRE11-RAD50-C1QBP) complex that inhibits the activity of MRE11. Interacts with AGER/RAGE. AGER is recruited to DNA double-strand break sites where it enhances MRE11 endonuclease activity to promote DNA repair. As to quaternary structure, (Microbial infection) Interacts with herpes simplex virus 1 protein UL12. It depends on Mn(2+) as a cofactor. Post-translationally, phosphorylated by ATM at Ser-676 and Ser-678 in response to DNA damage, promoting MRE11 activity: phosphorylation activates MRE11 by preventing the interaction between MRE11 and the C1QBP inhibitor. Phosphorylation at Ser-649 by PLK1 primes for phosphorylation at Ser-688 by CK2, inhibiting recruitment of the MRN complex to DNA damage sites. Asymmetric dimethylation by PRMT1 promotes MRE11 exonuclease activity. In terms of processing, lactylation at Lys-673 by CREBBP/CBP in response to DNA damage promotes DNA binding and MRE11 activity. Post-translationally, acetylated on lysine residues by KAT2A /GCN5. Ubiquitinated following DNA damage. Ubiquitination triggers interaction with UBQLN4, leading to MRE11 removal from chromatin and degradation by the proteasome. Ubiquitinated at Lys-339 and Lys-480 by RNF126 via 'Lys-27'- and 'Lys-29'-linked polyubiquitin chains, promoting the exonuclease activity of MRE11. In terms of processing, SUMOylated by PIAS1, stabilizing MRE11 on chromatin during end resection. DeSUMOylated by SENP3 following removal from DNA double-strand breaks (DSBs). Post-translationally, ufmylation at Lys-282 promotes MRE11 activity and is required for activation of the ATM and ATR kinases by the MRN complex. (Microbial infection) Following infection by adenovirus E4, ubiquitinated and degraded by a SCF-like E3 ubiquitin ligase complex containing viral proteins E1B-55K and E4-ORF6.

Its subcellular location is the nucleus. The protein resides in the chromosome. It localises to the telomere. With respect to regulation, interaction with SAMHD1 stimulates the double-strand-specific 3'-5' exonuclease activity. RBBP8/CtIP specifically promotes the endonuclease activity to clear protein-DNA adducts and generate clean double-strand break ends. DYNLL1-binding inhibits the activity of MRE11. MRE11 activity is inhibited by C1QBP: in absence of DNA damage, C1QBP interacts with unphosphorylated MRE11, preventing formation and activity of the MRN complex. The mirin-derivative PFM39, specifically inhibits the 3'-5' exonuclease activity. The N-alkylated mirin-derivatives PFM03 and PFM01 specifically inhibit the endonuclease activity. Functionally, core component of the MRN complex, which plays a central role in double-strand break (DSB) repair, DNA recombination, maintenance of telomere integrity and meiosis. The MRN complex is involved in the repair of DNA double-strand breaks (DSBs) via homologous recombination (HR), an error-free mechanism which primarily occurs during S and G2 phases. The complex (1) mediates the end resection of damaged DNA, which generates proper single-stranded DNA, a key initial steps in HR, and is (2) required for the recruitment of other repair factors and efficient activation of ATM and ATR upon DNA damage. Within the MRN complex, MRE11 possesses both single-strand endonuclease activity and double-strand-specific 3'-5' exonuclease activity. After DSBs, MRE11 is loaded onto DSBs sites and cleaves DNA by cooperating with RBBP8/CtIP to initiate end resection. MRE11 first endonucleolytically cleaves the 5' strand at DNA DSB ends to prevent non-homologous end joining (NHEJ) and licence HR. It then generates a single-stranded DNA gap via 3' to 5' exonucleolytic degradation to create entry sites for EXO1- and DNA2-mediated 5' to 3' long-range resection, which is required for single-strand invasion and recombination. RBBP8/CtIP specifically promotes the endonuclease activity of MRE11 to clear protein-DNA adducts and generate clean double-strand break ends. MRE11 endonuclease activity is also enhanced by AGER/RAGE. The MRN complex is also required for DNA damage signaling via activation of the ATM and ATR kinases: the nuclease activity of MRE11 is not required to activate ATM and ATR. The MRN complex is also required for the processing of R-loops. The MRN complex is involved in the activation of the cGAS-STING pathway induced by DNA damage during tumorigenesis: the MRN complex acts by displacing CGAS from nucleosome sequestration, thereby activating it. In telomeres the MRN complex may modulate t-loop formation. MRE11 contains two DNA-binding domains (DBDs), enabling it to bind both single-stranded DNA (ssDNA) and double-stranded DNA (dsDNA). The sequence is that of Double-strand break repair protein MRE11 from Homo sapiens (Human).